The sequence spans 463 residues: Pentatricopeptide repeat-containing protein At2g17670 (463 aa).

The interval 1 to 63 (MGKVPSSFRS…PSLRNPFKSP (63 aa)) is disordered. PPR repeat units follow at residues 121–157 (GRST…GLEP), 158–192 (DQVT…HSPP), 193–223 (DTYT…MRDD), 229–263 (DLVS…GFKP), 264–298 (DCFL…GVEP), 299–333 (DQIT…GYEP), 334–368 (DTAT…GCAP), 369–403 (NDCT…GVKL), and 404–438 (ESNG…KSLS).

The protein belongs to the PPR family. P subfamily.

This Arabidopsis thaliana (Mouse-ear cress) protein is Pentatricopeptide repeat-containing protein At2g17670.